Reading from the N-terminus, the 257-residue chain is Ribonuclease HII (257 aa).

In terms of domain architecture, RNase H type-2 spans threonine 72 to lysine 257. 3 residues coordinate a divalent metal cation: aspartate 78, glutamate 79, and aspartate 170.

It belongs to the RNase HII family. It depends on Mn(2+) as a cofactor. The cofactor is Mg(2+).

The protein localises to the cytoplasm. It carries out the reaction Endonucleolytic cleavage to 5'-phosphomonoester.. Endonuclease that specifically degrades the RNA of RNA-DNA hybrids. This Bacillus anthracis (strain A0248) protein is Ribonuclease HII.